Reading from the N-terminus, the 96-residue chain is Integration host factor subunit beta (96 aa).

Belongs to the bacterial histone-like protein family. In terms of assembly, heterodimer of an alpha and a beta chain.

Its function is as follows. This protein is one of the two subunits of integration host factor, a specific DNA-binding protein that functions in genetic recombination as well as in transcriptional and translational control. The sequence is that of Integration host factor subunit beta from Photobacterium profundum (strain SS9).